Consider the following 930-residue polypeptide: Dual serine/threonine and tyrosine protein kinase (930 aa).

Residues R383–K428 are a coiled coil. The Protein kinase domain maps to P653–L907. ATP contacts are provided by residues L659–V667 and K682. The active-site Proton acceptor is the D778.

It belongs to the protein kinase superfamily. Ser/Thr protein kinase family. In terms of tissue distribution, widely expressed with the highest expression in brain and ovary.

It localises to the cytoplasm. The protein localises to the cell membrane. Its subcellular location is the apical cell membrane. The protein resides in the basolateral cell membrane. It is found in the cell junction. It catalyses the reaction L-seryl-[protein] + ATP = O-phospho-L-seryl-[protein] + ADP + H(+). It carries out the reaction L-threonyl-[protein] + ATP = O-phospho-L-threonyl-[protein] + ADP + H(+). The enzyme catalyses L-tyrosyl-[protein] + ATP = O-phospho-L-tyrosyl-[protein] + ADP + H(+). In terms of biological role, may act as a positive regulator of ERK phosphorylation downstream of fibroblast growth factor-receptor activation. May induce both caspase-dependent apoptosis and caspase-independent cell death. This Gallus gallus (Chicken) protein is Dual serine/threonine and tyrosine protein kinase (DSTYK).